A 104-amino-acid polypeptide reads, in one-letter code: UPF0235 protein RBE_0633 (104 aa).

This sequence belongs to the UPF0235 family.

The polypeptide is UPF0235 protein RBE_0633 (Rickettsia bellii (strain RML369-C)).